Here is a 30-residue protein sequence, read N- to C-terminus: MITDFQVYIALMAALLASVLAIRLGATLYQ.

The chain crosses the membrane as a helical span at residues 7–29; the sequence is VYIALMAALLASVLAIRLGATLY.

This sequence belongs to the PsaM family.

The protein resides in the plastid. It is found in the chloroplast thylakoid membrane. The protein is Photosystem I reaction center subunit XII of Thalassiosira pseudonana (Marine diatom).